A 144-amino-acid chain; its full sequence is Prefoldin subunit alpha (144 aa).

Belongs to the prefoldin subunit alpha family. Heterohexamer of two alpha and four beta subunits.

It is found in the cytoplasm. In terms of biological role, molecular chaperone capable of stabilizing a range of proteins. Seems to fulfill an ATP-independent, HSP70-like function in archaeal de novo protein folding. This chain is Prefoldin subunit alpha, found in Methanosarcina barkeri (strain Fusaro / DSM 804).